The sequence spans 209 residues: MLTAIRKNGLILAVFACVSTGLVALTYALTAEQIQQQEQKQLLQVLNQVIPHKYHDNPLAQACTLVNDDKLGTAKPMHAYLAQRDGQPTAIAIETIAPDGYNGEIKLIVGIANNGTVLGVRVLAHQETPGLGDKIDLRISNWVLGFNGQQVTADNQDDWKVRKDGGQFDQFTGATITPRAVVLAVKKAVEYVNQHQQQLHNQPNPCEGQ.

Over 1–8 the chain is Cytoplasmic; the sequence is MLTAIRKN. A helical transmembrane segment spans residues 9–29; it reads GLILAVFACVSTGLVALTYAL. Residues 30-209 lie on the Periplasmic side of the membrane; that stretch reads TAEQIQQQEQ…HNQPNPCEGQ (180 aa). Residue Thr-175 is modified to FMN phosphoryl threonine.

It belongs to the RnfG family. The complex is composed of six subunits: RnfA, RnfB, RnfC, RnfD, RnfE and RnfG. It depends on FMN as a cofactor.

The protein localises to the cell inner membrane. In terms of biological role, part of a membrane-bound complex that couples electron transfer with translocation of ions across the membrane. The sequence is that of Ion-translocating oxidoreductase complex subunit G from Vibrio cholerae serotype O1 (strain ATCC 39541 / Classical Ogawa 395 / O395).